The primary structure comprises 243 residues: Venom nerve growth factor 5 (243 aa).

An N-terminal signal peptide occupies residues 1-18 (MSMLCYTLIIAFLIGIWA). The propeptide occupies 19–125 (APKSEDNVPL…TLNRNIRTKR (107 aa)). Basic and acidic residues predominate over residues 47 to 66 (GLKTSRNTDQRHPAPKKAED). Residues 47–67 (GLKTSRNTDQRHPAPKKAEDQ) are disordered. 3 disulfides stabilise this stretch: Cys139/Cys204, Cys182/Cys232, and Cys192/Cys234. N-linked (GlcNAc...) asparagine glycosylation is present at Asn148.

The protein belongs to the NGF-beta family. As to quaternary structure, homodimer; non-covalently linked. As to expression, expressed by the venom gland.

The protein resides in the secreted. Functionally, nerve growth factor is important for the development and maintenance of the sympathetic and sensory nervous systems. It stimulates division and differentiation of sympathetic and embryonic sensory neurons as well as basal forebrain cholinergic neurons in the brain. Its relevance in the snake venom is not clear. However, it has been shown to inhibit metalloproteinase-dependent proteolysis of platelet glycoprotein Ib alpha, suggesting a metalloproteinase inhibition to prevent metalloprotease autodigestion and/or protection against prey proteases. Binds a lipid between the two protein chains in the homodimer. The lipid-bound form promotes histamine relase from mouse mast cells, contrary to the lipid-free form. In Tropidechis carinatus (Australian rough-scaled snake), this protein is Venom nerve growth factor 5.